We begin with the raw amino-acid sequence, 700 residues long: Methionine--tRNA ligase (700 aa).

Residues 13–23 (PYANGDIHLGH) carry the 'HIGH' region motif. Zn(2+)-binding residues include Cys-144, Cys-147, Cys-157, and Cys-160. The 'KMSKS' region motif lies at 341–345 (KMSKS). Lys-344 is a binding site for ATP. The tRNA-binding domain occupies 598 to 700 (DFAKVEMKVA…DNCVIGDLLA (103 aa)).

This sequence belongs to the class-I aminoacyl-tRNA synthetase family. MetG type 1 subfamily. Homodimer. Zn(2+) serves as cofactor.

It localises to the cytoplasm. The enzyme catalyses tRNA(Met) + L-methionine + ATP = L-methionyl-tRNA(Met) + AMP + diphosphate. Is required not only for elongation of protein synthesis but also for the initiation of all mRNA translation through initiator tRNA(fMet) aminoacylation. The chain is Methionine--tRNA ligase from Psychrobacter arcticus (strain DSM 17307 / VKM B-2377 / 273-4).